The following is a 593-amino-acid chain: CTD kinase subunit alpha (593 aa).

Composition is skewed to polar residues over residues 1 to 17 (MSYSKSTIYRRQGTEPN) and 29 to 51 (QLSGTNEESLGGHTLSSNAFKNN). The tract at residues 1 to 262 (MSYSKSTIYR…ESVPAPLPSP (262 aa)) is disordered. A phosphoserine mark is found at Ser56 and Ser58. The span at 90-103 (RSRKSRRRKGKKAF) shows a compositional bias: basic residues. A phosphoserine mark is found at Ser104 and Ser109. Over residues 139 to 152 (SSSSASVSPISPSA) the composition is skewed to low complexity. Residues 160-170 (QASSFRRSPPS) are compositionally biased toward polar residues. Residues 198-215 (IPHETTSSDTQKKSSVSS) are compositionally biased toward low complexity. The region spanning 277–561 (YEKIDQIGEG…AHETLMHEYF (285 aa)) is the Protein kinase domain. ATP contacts are provided by residues 283–291 (IGEGTYGKV) and Lys306. Asp399 serves as the catalytic Proton acceptor.

The protein belongs to the protein kinase superfamily. CMGC Ser/Thr protein kinase family. CDC2/CDKX subfamily. CTDK-I consists of three subunits, ctk1/lsk1, ctk2/lsc1 and ctk3 (also called alpha, beta and gamma). Interacts with ctk2/lsc1. This interaction is dependent on kinase activity.

It is found in the nucleus. The protein resides in the nucleolus. The enzyme catalyses [DNA-directed RNA polymerase] + ATP = phospho-[DNA-directed RNA polymerase] + ADP + H(+). Functionally, catalytic subunit of the CTDK-I complex, which hyperphosphorylates the C-terminal heptapeptide repeat domain (CTD) of the largest RNA polymerase II subunit. Involved in RNA polymerase II transcriptional elongation and pre-mRNA 3'-end processing. Together with ctk2/lsc1, required for the regulation of cytokinesis by phosphorylating 'Ser-2' residues found in the heptad repeats of the CTD. Required for nuclear localization of ctk2/lsc1. Positively regulates the septation initiation network (SIN) and promotes successful completion of cytokinesis in response to perturbation of the actomyosin ring. Acts in parallel to clp1 to promote actomyosin ring stability upon cytokinesis checkpoint activation. This chain is CTD kinase subunit alpha, found in Schizosaccharomyces pombe (strain 972 / ATCC 24843) (Fission yeast).